Reading from the N-terminus, the 652-residue chain is Beta-glucuronidase (652 aa).

The N-terminal stretch at 1-22 (MVRGPAGAWAVLGPLLWGCGLA) is a signal peptide. N-linked (GlcNAc...) asparagine glycans are attached at residues Asn-173 and Asn-420. The active-site Proton donor is the Glu-451. N-linked (GlcNAc...) asparagine glycosylation is present at Asn-631.

This sequence belongs to the glycosyl hydrolase 2 family. In terms of assembly, homotetramer.

Its subcellular location is the lysosome. The catalysed reaction is a beta-D-glucuronoside + H2O = D-glucuronate + an alcohol. Its activity is regulated as follows. Inhibited by L-aspartic acid. In terms of biological role, plays an important role in the degradation of dermatan and keratan sulfates. The chain is Beta-glucuronidase (GUSB) from Sus scrofa (Pig).